The primary structure comprises 53 residues: Abaecin (53 aa).

The first 19 residues, 1–19 (MKVVIFIFALLATICAAFA), serve as a signal peptide directing secretion.

Its subcellular location is the secreted. Its function is as follows. This peptide has bactericidal activity. This chain is Abaecin, found in Apis mellifera (Honeybee).